A 428-amino-acid polypeptide reads, in one-letter code: Phosphomethylpyrimidine synthase 1 (428 aa).

Residues Met-94, Tyr-123, His-162, 184 to 186 (SRG), 225 to 228 (NGMR), and Glu-264 each bind substrate. His-268 serves as a coordination point for Zn(2+). Tyr-291 is a binding site for substrate. His-332 is a binding site for Zn(2+). Residues Cys-408, Cys-411, and Cys-415 each contribute to the [4Fe-4S] cluster site.

This sequence belongs to the ThiC family. [4Fe-4S] cluster serves as cofactor.

The enzyme catalyses 5-amino-1-(5-phospho-beta-D-ribosyl)imidazole + S-adenosyl-L-methionine = 4-amino-2-methyl-5-(phosphooxymethyl)pyrimidine + CO + 5'-deoxyadenosine + formate + L-methionine + 3 H(+). It functions in the pathway cofactor biosynthesis; thiamine diphosphate biosynthesis. Catalyzes the synthesis of the hydroxymethylpyrimidine phosphate (HMP-P) moiety of thiamine from aminoimidazole ribotide (AIR) in a radical S-adenosyl-L-methionine (SAM)-dependent reaction. This is Phosphomethylpyrimidine synthase 1 from Methanosarcina barkeri (strain Fusaro / DSM 804).